Reading from the N-terminus, the 447-residue chain is N-succinylarginine dihydrolase (447 aa).

Substrate is bound by residues 19-28, Asn110, and 137-138; these read AGLSFGNEAS and HR. Glu174 is a catalytic residue. Arg212 contributes to the substrate binding site. His248 is a catalytic residue. Substrate contacts are provided by Asp250 and Asn359. Residue Cys365 is the Nucleophile of the active site.

Belongs to the succinylarginine dihydrolase family. In terms of assembly, homodimer.

The catalysed reaction is N(2)-succinyl-L-arginine + 2 H2O + 2 H(+) = N(2)-succinyl-L-ornithine + 2 NH4(+) + CO2. It functions in the pathway amino-acid degradation; L-arginine degradation via AST pathway; L-glutamate and succinate from L-arginine: step 2/5. In terms of biological role, catalyzes the hydrolysis of N(2)-succinylarginine into N(2)-succinylornithine, ammonia and CO(2). The sequence is that of N-succinylarginine dihydrolase from Salmonella typhimurium (strain LT2 / SGSC1412 / ATCC 700720).